The primary structure comprises 496 residues: Apolipoprotein N-acyltransferase (496 aa).

The next 6 helical transmembrane spans lie at 23–43 (GIAT…FILW), 50–70 (LANF…LYEL), 84–104 (LIIS…LVYL), 126–146 (LTIK…ILSQ), 171–191 (WIGA…IYLI), and 205–225 (FLFG…TNPI). In terms of domain architecture, CN hydrolase spans 236-464 (WQTNMPTREK…NDVVNPNFSI (229 aa)). The Proton acceptor role is filled by E276. Residue K325 is part of the active site. C374 serves as the catalytic Nucleophile. Residues 476 to 496 (PLFLLCLFLIGLNLYFGKFTN) form a helical membrane-spanning segment.

It belongs to the CN hydrolase family. Apolipoprotein N-acyltransferase subfamily.

The protein localises to the cell inner membrane. The enzyme catalyses N-terminal S-1,2-diacyl-sn-glyceryl-L-cysteinyl-[lipoprotein] + a glycerophospholipid = N-acyl-S-1,2-diacyl-sn-glyceryl-L-cysteinyl-[lipoprotein] + a 2-acyl-sn-glycero-3-phospholipid + H(+). It participates in protein modification; lipoprotein biosynthesis (N-acyl transfer). Its function is as follows. Catalyzes the phospholipid dependent N-acylation of the N-terminal cysteine of apolipoprotein, the last step in lipoprotein maturation. This chain is Apolipoprotein N-acyltransferase, found in Prochlorococcus marinus subsp. pastoris (strain CCMP1986 / NIES-2087 / MED4).